A 444-amino-acid chain; its full sequence is 23S rRNA (uracil(1939)-C(5))-methyltransferase RlmD (444 aa).

The 63-residue stretch at 5-67 folds into the TRAM domain; that stretch reads RNRFDRTPFQ…RHFDEAKTVE (63 aa). 4 residues coordinate [4Fe-4S] cluster: Cys80, Cys86, Cys89, and Cys168. The S-adenosyl-L-methionine site is built by Gln276, Phe305, Asn310, Glu326, Asp353, and Asp374. Cys400 serves as the catalytic Nucleophile.

Belongs to the class I-like SAM-binding methyltransferase superfamily. RNA M5U methyltransferase family. RlmD subfamily.

It carries out the reaction uridine(1939) in 23S rRNA + S-adenosyl-L-methionine = 5-methyluridine(1939) in 23S rRNA + S-adenosyl-L-homocysteine + H(+). In terms of biological role, catalyzes the formation of 5-methyl-uridine at position 1939 (m5U1939) in 23S rRNA. The protein is 23S rRNA (uracil(1939)-C(5))-methyltransferase RlmD of Xanthomonas oryzae pv. oryzae (strain KACC10331 / KXO85).